Consider the following 1463-residue polypeptide: DNA polymerase III PolC-type (1463 aa).

Residues 425–581 (YVVFDVETTG…YDAEATGRLL (157 aa)) form the Exonuclease domain.

This sequence belongs to the DNA polymerase type-C family. PolC subfamily.

The protein localises to the cytoplasm. It carries out the reaction DNA(n) + a 2'-deoxyribonucleoside 5'-triphosphate = DNA(n+1) + diphosphate. Required for replicative DNA synthesis. This DNA polymerase also exhibits 3' to 5' exonuclease activity. The polypeptide is DNA polymerase III PolC-type (Streptococcus pneumoniae serotype 2 (strain D39 / NCTC 7466)).